The sequence spans 352 residues: ADP-ribosylation factor GTPase-activating protein GCS1 (352 aa).

The Arf-GAP domain maps to 11–127 (RRRLLQLQKI…LTCLCEDRVF (117 aa)). The C4-type zinc finger occupies 26 to 49 (CMDCGAPNPQWATPKFGAFICLEC). Positions 138 to 151 (SKLSATSQTAASAT) are enriched in low complexity. Disordered regions lie at residues 138–181 (SKLS…ANFQ) and 196–231 (NQSRPDHLPPSQGGKYQGFGSTPAKPPQERSAGSSN). Phosphothreonine is present on T151. S157 carries the post-translational modification Phosphoserine. T161 carries the post-translational modification Phosphothreonine. Position 168 is a phosphoserine (S168). The segment covering 168-179 (SATPANSSNGAN) has biased composition (polar residues). T170 carries the phosphothreonine modification. S260 is modified (phosphoserine). Residues 315–330 (NGNAEDSSTAGNTTHT) are compositionally biased toward polar residues. The interval 315-352 (NGNAEDSSTAGNTTHTEYQKIDNNDKKNEQDEDKWDDF) is disordered. The segment covering 331–343 (EYQKIDNNDKKNE) has biased composition (basic and acidic residues).

The protein localises to the cytoplasm. The protein resides in the mitochondrion. It localises to the perinuclear region. Its subcellular location is the golgi apparatus. In terms of biological role, GTPase-activating protein (GAP) for ARF1 and ARF2. Involved in intracellular vesicular transport. Required for transport from the trans-Golgi network. Implicated in the regulation of retrograde transport from the Golgi to the ER and in actin cytoskeletal organization. May be involved in the maintenance of mitochondrial morphology, possibly through organizing the actin cytoskeleton in Saccharomyces. This Saccharomyces cerevisiae (strain ATCC 204508 / S288c) (Baker's yeast) protein is ADP-ribosylation factor GTPase-activating protein GCS1 (GCS1).